The chain runs to 886 residues: MLGFIKDWLDDNAREIKKLQRVVDEINKLEPEIAAKSDGDLQGMTAVFRDRLDRGESLDGILPEAFAVVREASRRVLGMRHFDVQLMGGIVLHQGRIAEMKTGEGKTLVATLPVYLNALTGKGVHVVTVNDYLARRDSEWMGQVYKYLGLSVGLIVHGLDWEERKRSYRADVTYGTNNEFGFDYLRDNMALHPDQLVQRELNYAIVDEVDSILIDEARTPLIISGQAEKSTDLYYTFARIVPRLVPEVDYNVDEKAHTVVITETGVAKVEKMLGVENLYDDRNIELTHHLNQALKAHALMKRDRDYVVKDGQVIIVDEFTGRLMFGRRYSDGLHQAIEAKEGVKIERESQTLATITFQNYFRMYRKLAGMTGTAATEEQEFKKIYGLDVVVIPTNKPMIRKDLPDVIYKTEQAKFRAVVEEIAARHARGQPVLVGTISIEKSEMLSGMLKKRGIPHQVLNAKYHDKEAEIVAQAGRLGAVTIATNMAGRGTDILLGGNPEFLARNELRRMGHECEAAAEIAGAPAEQDGAYKALLEKFRRQTEEERRRVVELGGLHIIGTERHESRRIDNQLRGRCGRQGDPGSSQFFSSLEDDLMRLFGSENIAGIMDRLGIDEDMPIEHAMITKSIEAAQKRVENRNFDIRKHVLQYDDVMNQQRELIYRQRRQVLTGENLKENVLEMIGTCVERAVNTYAPEGVHPEEWDLKGLLEHAEHLFLPGHGLTAGDLAGMSRRELQEFLTERSRAAYDAREQELGADTMREIERVIMLRIVDEKWMDHLDAMDQLREGIGLRAYGQKDPLVEYKFEGYEMFQNMIASIQDDVVRYIFRVNVVQPQQQRQSRRVVENRYAEEGPKQPARRENKVGRNDPCPCGSGRKYKKCCGRAEAV.

ATP is bound by residues glutamine 85, 103–107 (GEGKT), and aspartate 492. The segment covering 841–864 (RVVENRYAEEGPKQPARRENKVGR) has biased composition (basic and acidic residues). A disordered region spans residues 841–866 (RVVENRYAEEGPKQPARRENKVGRND). Cysteine 868, cysteine 870, cysteine 879, and cysteine 880 together coordinate Zn(2+).

This sequence belongs to the SecA family. In terms of assembly, monomer and homodimer. Part of the essential Sec protein translocation apparatus which comprises SecA, SecYEG and auxiliary proteins SecDF. Other proteins may also be involved. Requires Zn(2+) as cofactor.

It localises to the cell membrane. The protein localises to the cytoplasm. It carries out the reaction ATP + H2O + cellular proteinSide 1 = ADP + phosphate + cellular proteinSide 2.. Its function is as follows. Part of the Sec protein translocase complex. Interacts with the SecYEG preprotein conducting channel. Has a central role in coupling the hydrolysis of ATP to the transfer of proteins into and across the cell membrane, serving as an ATP-driven molecular motor driving the stepwise translocation of polypeptide chains across the membrane. This is Protein translocase subunit SecA from Pelotomaculum thermopropionicum (strain DSM 13744 / JCM 10971 / SI).